The following is a 796-amino-acid chain: Molybdenum cofactor sulfurase (796 aa).

Lysine 246 is modified (N6-(pyridoxal phosphate)lysine). Cysteine 418 is a catalytic residue. The MOSC domain maps to 650-796 (LRLLRQSSQR…LTCGDVVVVT (147 aa)). Serine 752 is subject to Phosphoserine.

Belongs to the class-V pyridoxal-phosphate-dependent aminotransferase family. MOCOS subfamily. Pyridoxal 5'-phosphate serves as cofactor.

The enzyme catalyses Mo-molybdopterin + L-cysteine + AH2 = thio-Mo-molybdopterin + L-alanine + A + H2O. Sulfurates the molybdenum cofactor. Sulfation of molybdenum is essential for xanthine dehydrogenase (XDH) and aldehyde oxidase (ADO) enzymes in which molybdenum cofactor is liganded by 1 oxygen and 1 sulfur atom in active form. The chain is Molybdenum cofactor sulfurase from Drosophila persimilis (Fruit fly).